The sequence spans 86 residues: Small ribosomal subunit protein bS20 (86 aa).

A disordered region spans residues 1 to 27; that stretch reads MANSKQAKKRAGQSEKRRQHNASRRSM.

It belongs to the bacterial ribosomal protein bS20 family.

Its function is as follows. Binds directly to 16S ribosomal RNA. This is Small ribosomal subunit protein bS20 from Colwellia psychrerythraea (strain 34H / ATCC BAA-681) (Vibrio psychroerythus).